Reading from the N-terminus, the 500-residue chain is Protein nucleotidyltransferase YdiU (500 aa).

8 residues coordinate ATP: G96, G98, R99, K119, D131, G132, R182, and R189. Residue D258 is the Proton acceptor of the active site. Positions 259 and 268 each coordinate Mg(2+). D268 lines the ATP pocket.

It belongs to the SELO family. The cofactor is Mg(2+). It depends on Mn(2+) as a cofactor.

It catalyses the reaction L-seryl-[protein] + ATP = 3-O-(5'-adenylyl)-L-seryl-[protein] + diphosphate. It carries out the reaction L-threonyl-[protein] + ATP = 3-O-(5'-adenylyl)-L-threonyl-[protein] + diphosphate. The enzyme catalyses L-tyrosyl-[protein] + ATP = O-(5'-adenylyl)-L-tyrosyl-[protein] + diphosphate. The catalysed reaction is L-histidyl-[protein] + UTP = N(tele)-(5'-uridylyl)-L-histidyl-[protein] + diphosphate. It catalyses the reaction L-seryl-[protein] + UTP = O-(5'-uridylyl)-L-seryl-[protein] + diphosphate. It carries out the reaction L-tyrosyl-[protein] + UTP = O-(5'-uridylyl)-L-tyrosyl-[protein] + diphosphate. Its function is as follows. Nucleotidyltransferase involved in the post-translational modification of proteins. It can catalyze the addition of adenosine monophosphate (AMP) or uridine monophosphate (UMP) to a protein, resulting in modifications known as AMPylation and UMPylation. In Rhizobium leguminosarum bv. trifolii (strain WSM2304), this protein is Protein nucleotidyltransferase YdiU.